A 101-amino-acid polypeptide reads, in one-letter code: MVGLEHYLTVSAALLVIGIFGIFLNRKNVIVILMSIELMLLAVNINLVAFSSFLGDLTGQVFTLFVLTVAAAEAAIGLAILVTFFRNRGTIDVEDVNVMKG.

Helical transmembrane passes span 4 to 24 (LEHYLTVSAALLVIGIFGIFL), 30 to 50 (IVILMSIELMLLAVNINLVAF), and 65 to 85 (FVLTVAAAEAAIGLAILVTFF).

Belongs to the complex I subunit 4L family. As to quaternary structure, NDH-1 is composed of 14 different subunits. Subunits NuoA, H, J, K, L, M, N constitute the membrane sector of the complex.

It is found in the cell inner membrane. It catalyses the reaction a quinone + NADH + 5 H(+)(in) = a quinol + NAD(+) + 4 H(+)(out). In terms of biological role, NDH-1 shuttles electrons from NADH, via FMN and iron-sulfur (Fe-S) centers, to quinones in the respiratory chain. The immediate electron acceptor for the enzyme in this species is believed to be ubiquinone. Couples the redox reaction to proton translocation (for every two electrons transferred, four hydrogen ions are translocated across the cytoplasmic membrane), and thus conserves the redox energy in a proton gradient. The protein is NADH-quinone oxidoreductase subunit K of Cereibacter sphaeroides (strain ATCC 17029 / ATH 2.4.9) (Rhodobacter sphaeroides).